A 240-amino-acid polypeptide reads, in one-letter code: DNA repair protein RecO (240 aa).

Belongs to the RecO family.

Its function is as follows. Involved in DNA repair and RecF pathway recombination. This Actinobacillus pleuropneumoniae serotype 3 (strain JL03) protein is DNA repair protein RecO.